The following is a 187-amino-acid chain: Peptidyl-tRNA hydrolase (187 aa).

Residue Tyr-15 participates in tRNA binding. Residue His-20 is the Proton acceptor of the active site. Positions 65, 67, and 113 each coordinate tRNA.

Belongs to the PTH family. As to quaternary structure, monomer.

The protein resides in the cytoplasm. It carries out the reaction an N-acyl-L-alpha-aminoacyl-tRNA + H2O = an N-acyl-L-amino acid + a tRNA + H(+). Its function is as follows. Hydrolyzes ribosome-free peptidyl-tRNAs (with 1 or more amino acids incorporated), which drop off the ribosome during protein synthesis, or as a result of ribosome stalling. In terms of biological role, catalyzes the release of premature peptidyl moieties from peptidyl-tRNA molecules trapped in stalled 50S ribosomal subunits, and thus maintains levels of free tRNAs and 50S ribosomes. The protein is Peptidyl-tRNA hydrolase of Elusimicrobium minutum (strain Pei191).